The chain runs to 429 residues: Glutamate-1-semialdehyde 2,1-aminomutase 2 (429 aa).

Residue Lys-268 is modified to N6-(pyridoxal phosphate)lysine.

It belongs to the class-III pyridoxal-phosphate-dependent aminotransferase family. HemL subfamily. As to quaternary structure, homodimer. Pyridoxal 5'-phosphate serves as cofactor.

It is found in the cytoplasm. It carries out the reaction (S)-4-amino-5-oxopentanoate = 5-aminolevulinate. The protein operates within porphyrin-containing compound metabolism; protoporphyrin-IX biosynthesis; 5-aminolevulinate from L-glutamyl-tRNA(Glu): step 2/2. The protein is Glutamate-1-semialdehyde 2,1-aminomutase 2 of Bacillus cereus (strain B4264).